The chain runs to 734 residues: Transcriptional regulator AacuB (734 aa).

The segment at residues 26–52 is a DNA-binding region (zn(2)-C6 fungal-type); that stretch reads CVLCQQRKIKCDRTFPCTNCVRAHVQC. Over residues 86 to 107 the composition is skewed to basic and acidic residues; that stretch reads FDPLHTPTADHRSASDDGRDDL. The interval 86–122 is disordered; that stretch reads FDPLHTPTADHRSASDDGRDDLPEGAESEGTFGEREK.

Its subcellular location is the nucleus. In terms of biological role, transcriptional regulator; part of the gene cluster that mediates the biosynthesis of the tetrahydroxanthone dimer secalonic acid D. This is Transcriptional regulator AacuB from Aspergillus aculeatus (strain ATCC 16872 / CBS 172.66 / WB 5094).